Reading from the N-terminus, the 385-residue chain is Multidrug resistance protein MdtE (385 aa).

Positions 1–20 are cleaved as a signal peptide; the sequence is MNRRRKLLIPLLFCGAMLTA. Cys21 carries N-palmitoyl cysteine lipidation. Cys21 carries S-diacylglycerol cysteine lipidation.

This sequence belongs to the membrane fusion protein (MFP) (TC 8.A.1) family. As to quaternary structure, homotrimer. Part of the tripartite efflux system MdtEF-TolC, which is composed of an inner membrane transporter, MdtF, a membrane fusion protein, MdtE, and an outer membrane component, TolC. The complex forms a large protein conduit and can translocate molecules across both the inner and outer membranes.

The protein localises to the cell inner membrane. Part of the tripartite efflux system MdtEF-TolC, which confers resistance to various compounds. In Escherichia coli O6:H1 (strain CFT073 / ATCC 700928 / UPEC), this protein is Multidrug resistance protein MdtE (mdtE).